Reading from the N-terminus, the 462-residue chain is Arginine biosynthesis bifunctional protein ArgJ, mitochondrial (462 aa).

Residues T200, K228, T239, E326, N457, and T462 each contribute to the substrate site. T239 (nucleophile) is an active-site residue.

This sequence belongs to the ArgJ family. Heterodimer of an alpha and a beta chain. Post-translationally, the alpha and beta chains are autoproteolytically processed from a single precursor protein within the mitochondrion.

It is found in the mitochondrion matrix. The enzyme catalyses N(2)-acetyl-L-ornithine + L-glutamate = N-acetyl-L-glutamate + L-ornithine. It carries out the reaction L-glutamate + acetyl-CoA = N-acetyl-L-glutamate + CoA + H(+). The protein operates within amino-acid biosynthesis; L-arginine biosynthesis; L-ornithine and N-acetyl-L-glutamate from L-glutamate and N(2)-acetyl-L-ornithine (cyclic): step 1/1. It functions in the pathway amino-acid biosynthesis; L-arginine biosynthesis; N(2)-acetyl-L-ornithine from L-glutamate: step 1/4. Catalyzes two activities which are involved in the cyclic version of arginine biosynthesis: the synthesis of acetylglutamate from glutamate and acetyl-CoA, and of ornithine by transacetylation between acetylornithine and glutamate. This Pyrenophora tritici-repentis (strain Pt-1C-BFP) (Wheat tan spot fungus) protein is Arginine biosynthesis bifunctional protein ArgJ, mitochondrial.